A 321-amino-acid polypeptide reads, in one-letter code: tRNA-dihydrouridine synthase B (321 aa).

FMN contacts are provided by residues 16-18 (PMA) and Gln-70. Catalysis depends on Cys-100, which acts as the Proton donor. FMN contacts are provided by residues Lys-139, 200 to 202 (NGD), and 224 to 225 (GR).

This sequence belongs to the Dus family. DusB subfamily. FMN serves as cofactor.

The catalysed reaction is a 5,6-dihydrouridine in tRNA + NAD(+) = a uridine in tRNA + NADH + H(+). The enzyme catalyses a 5,6-dihydrouridine in tRNA + NADP(+) = a uridine in tRNA + NADPH + H(+). In terms of biological role, catalyzes the synthesis of 5,6-dihydrouridine (D), a modified base found in the D-loop of most tRNAs, via the reduction of the C5-C6 double bond in target uridines. This Escherichia coli O157:H7 protein is tRNA-dihydrouridine synthase B.